A 348-amino-acid polypeptide reads, in one-letter code: Dihydroorotase (348 aa).

Residues H17 and H19 each contribute to the Zn(2+) site. Substrate-binding positions include 19 to 21 (HLR) and N45. 3 residues coordinate Zn(2+): K103, H140, and H178. Position 103 is an N6-carboxylysine (K103). H140 provides a ligand contact to substrate. Residue L223 coordinates substrate. D251 contacts Zn(2+). D251 is an active-site residue. Substrate contacts are provided by H255 and A267.

The protein belongs to the metallo-dependent hydrolases superfamily. DHOase family. Class II DHOase subfamily. Homodimer. Requires Zn(2+) as cofactor.

It catalyses the reaction (S)-dihydroorotate + H2O = N-carbamoyl-L-aspartate + H(+). The protein operates within pyrimidine metabolism; UMP biosynthesis via de novo pathway; (S)-dihydroorotate from bicarbonate: step 3/3. Its function is as follows. Catalyzes the reversible cyclization of carbamoyl aspartate to dihydroorotate. This is Dihydroorotase from Escherichia coli (strain UTI89 / UPEC).